Reading from the N-terminus, the 257-residue chain is uncharacterized protein (257 aa).

The helical transmembrane segment at 7–27 threads the bilayer; it reads IGILEIVVILSILITSVSLAY.

It localises to the membrane. This is an uncharacterized protein from Methanocaldococcus jannaschii (strain ATCC 43067 / DSM 2661 / JAL-1 / JCM 10045 / NBRC 100440) (Methanococcus jannaschii).